A 265-amino-acid chain; its full sequence is Probable FAD synthase (265 aa).

It belongs to the PAPS reductase family. FAD1 subfamily.

It catalyses the reaction FMN + ATP + H(+) = FAD + diphosphate. Its pathway is cofactor biosynthesis; FAD biosynthesis; FAD from FMN: step 1/1. Functionally, adenylates FMN to FAD. The sequence is that of Probable FAD synthase from Schizosaccharomyces pombe (strain 972 / ATCC 24843) (Fission yeast).